A 298-amino-acid chain; its full sequence is NAD kinase (298 aa).

The active-site Proton acceptor is Asp-80. Residues 80–81, 154–155, Arg-182, Asp-184, 195–200, Ala-219, and Gln-253 contribute to the NAD(+) site; these read DG, ND, and TAYALS.

It belongs to the NAD kinase family. A divalent metal cation is required as a cofactor.

It is found in the cytoplasm. It catalyses the reaction NAD(+) + ATP = ADP + NADP(+) + H(+). In terms of biological role, involved in the regulation of the intracellular balance of NAD and NADP, and is a key enzyme in the biosynthesis of NADP. Catalyzes specifically the phosphorylation on 2'-hydroxyl of the adenosine moiety of NAD to yield NADP. This chain is NAD kinase, found in Acidovorax ebreus (strain TPSY) (Diaphorobacter sp. (strain TPSY)).